The primary structure comprises 41 residues: Photosystem I reaction center subunit IX (41 aa).

Residues 7-27 (YLSSAPILATIWFAITAGILI) form a helical membrane-spanning segment.

It belongs to the PsaJ family.

The protein localises to the cellular thylakoid membrane. In terms of biological role, may help in the organization of the PsaE and PsaF subunits. The chain is Photosystem I reaction center subunit IX from Synechococcus sp. (strain ATCC 27144 / PCC 6301 / SAUG 1402/1) (Anacystis nidulans).